Here is a 323-residue protein sequence, read N- to C-terminus: tRNA U34 carboxymethyltransferase (323 aa).

Carboxy-S-adenosyl-L-methionine is bound by residues lysine 91, tryptophan 105, lysine 110, glycine 130, 152-154 (DPT), 181-182 (IE), methionine 196, tyrosine 200, and arginine 315.

Belongs to the class I-like SAM-binding methyltransferase superfamily. CmoB family. As to quaternary structure, homotetramer.

The enzyme catalyses carboxy-S-adenosyl-L-methionine + 5-hydroxyuridine(34) in tRNA = 5-carboxymethoxyuridine(34) in tRNA + S-adenosyl-L-homocysteine + H(+). Functionally, catalyzes carboxymethyl transfer from carboxy-S-adenosyl-L-methionine (Cx-SAM) to 5-hydroxyuridine (ho5U) to form 5-carboxymethoxyuridine (cmo5U) at position 34 in tRNAs. The protein is tRNA U34 carboxymethyltransferase of Escherichia fergusonii (strain ATCC 35469 / DSM 13698 / CCUG 18766 / IAM 14443 / JCM 21226 / LMG 7866 / NBRC 102419 / NCTC 12128 / CDC 0568-73).